The chain runs to 334 residues: NmrA-like family domain-containing oxidoreductase lnaB (334 aa).

Residues 12 to 17 (GGTGKQ), 38 to 42 (RNAQS), 59 to 60 (DG), 80 to 82 (INS), Lys-138, and 162 to 165 (FLEN) contribute to the NADP(+) site.

It belongs to the NmrA-type oxidoreductase family.

It functions in the pathway secondary metabolite biosynthesis. NmrA-like family domain-containing oxidoreductase; part of the lna gene cluster that mediates the biosynthesis of diastereomeric piperazines. Lna and lnb clusters encode sets of enzymes that produce overlapping sets of previously undescribed metabolites such as piperazinomycin-like metabolites or morpholine. The lna and lnb biosynthetic pathways appear to be part of a signaling network that controls the formation of sclerotia, a resilient overwintering structure. One primary function of the non-canonical nonribosomal peptide synthetases lnaA and lnbA consists in the reduction of L-tyrosine. The presence in the clusters of tailoring enzymes such as the oxidoreductases lnaB, lnbB, lnaE or lnbE, as well as of the cytochrome P450 monooxygenases lnaC, lnaD, or lnbC, might explain formation of various diastereomeric piperazines. The sequence is that of NmrA-like family domain-containing oxidoreductase lnaB from Aspergillus flavus (strain ATCC 200026 / FGSC A1120 / IAM 13836 / NRRL 3357 / JCM 12722 / SRRC 167).